The primary structure comprises 276 residues: Large ribosomal subunit protein uL2 (276 aa).

The tract at residues 223–276 (GSAMNPVDHPHGGGEGKAPIGHPGPLTPWGKPTLGYKTRKKNKPSDKFIVKRRK) is disordered. A compositionally biased stretch (basic and acidic residues) spans 265 to 276 (KPSDKFIVKRRK).

This sequence belongs to the universal ribosomal protein uL2 family. Part of the 50S ribosomal subunit. Forms a bridge to the 30S subunit in the 70S ribosome.

Functionally, one of the primary rRNA binding proteins. Required for association of the 30S and 50S subunits to form the 70S ribosome, for tRNA binding and peptide bond formation. It has been suggested to have peptidyltransferase activity; this is somewhat controversial. Makes several contacts with the 16S rRNA in the 70S ribosome. The chain is Large ribosomal subunit protein uL2 from Caldicellulosiruptor saccharolyticus (strain ATCC 43494 / DSM 8903 / Tp8T 6331).